We begin with the raw amino-acid sequence, 82 residues long: MGREFGNLTRMRHVITYSLSPFEQRAFPHYFSKGIPNVLRRMRACVLRVVPPFVAFYLVYTWGTQEFENSKRKNPAAYENDK.

Residues 1 to 39 (MGREFGNLTRMRHVITYSLSPFEQRAFPHYFSKGIPNVL) are Mitochondrial matrix-facing. The residue at position 33 (lysine 33) is an N6-acetyllysine; alternate. The residue at position 33 (lysine 33) is an N6-succinyllysine; alternate. The helical transmembrane segment at 40–68 (RRMRACVLRVVPPFVAFYLVYTWGTQEFE) threads the bilayer. The Mitochondrial intermembrane segment spans residues 69-82 (NSKRKNPAAYENDK).

Belongs to the UQCRQ/QCR8 family. Component of the ubiquinol-cytochrome c oxidoreductase (cytochrome b-c1 complex, complex III, CIII), a multisubunit enzyme composed of 11 subunits. The complex is composed of 3 respiratory subunits cytochrome b, cytochrome c1 and Rieske protein UQCRFS1, 2 core protein subunits UQCRC1/QCR1 and UQCRC2/QCR2, and 6 low-molecular weight protein subunits UQCRH/QCR6, UQCRB/QCR7, UQCRQ/QCR8, UQCR10/QCR9, UQCR11/QCR10 and subunit 9, the cleavage product of Rieske protein UQCRFS1. The complex exists as an obligatory dimer and forms supercomplexes (SCs) in the inner mitochondrial membrane with NADH-ubiquinone oxidoreductase (complex I, CI) and cytochrome c oxidase (complex IV, CIV), resulting in different assemblies (supercomplex SCI(1)III(2)IV(1) and megacomplex MCI(2)III(2)IV(2)). Interacts with UQCC6.

The protein localises to the mitochondrion inner membrane. In terms of biological role, component of the ubiquinol-cytochrome c oxidoreductase, a multisubunit transmembrane complex that is part of the mitochondrial electron transport chain which drives oxidative phosphorylation. The respiratory chain contains 3 multisubunit complexes succinate dehydrogenase (complex II, CII), ubiquinol-cytochrome c oxidoreductase (cytochrome b-c1 complex, complex III, CIII) and cytochrome c oxidase (complex IV, CIV), that cooperate to transfer electrons derived from NADH and succinate to molecular oxygen, creating an electrochemical gradient over the inner membrane that drives transmembrane transport and the ATP synthase. The cytochrome b-c1 complex catalyzes electron transfer from ubiquinol to cytochrome c, linking this redox reaction to translocation of protons across the mitochondrial inner membrane, with protons being carried across the membrane as hydrogens on the quinol. In the process called Q cycle, 2 protons are consumed from the matrix, 4 protons are released into the intermembrane space and 2 electrons are passed to cytochrome c. In Ailuropoda melanoleuca (Giant panda), this protein is Cytochrome b-c1 complex subunit 8 (UQCRQ).